Reading from the N-terminus, the 160-residue chain is Transcription elongation factor GreA (160 aa).

A coiled-coil region spans residues 14-38 (IKAELASLKKERPEVIKAIAEAREE).

It belongs to the GreA/GreB family.

Its function is as follows. Necessary for efficient RNA polymerase transcription elongation past template-encoded arresting sites. The arresting sites in DNA have the property of trapping a certain fraction of elongating RNA polymerases that pass through, resulting in locked ternary complexes. Cleavage of the nascent transcript by cleavage factors such as GreA or GreB allows the resumption of elongation from the new 3'terminus. GreA releases sequences of 2 to 3 nucleotides. The sequence is that of Transcription elongation factor GreA from Maridesulfovibrio salexigens (strain ATCC 14822 / DSM 2638 / NCIMB 8403 / VKM B-1763) (Desulfovibrio salexigens).